A 703-amino-acid chain; its full sequence is MKLNIFASAILLCTSAFPVAASRLDKPYTEVYRPQYHFSPKENWMNDPNGLVYDTDEGIYHIYFQYNPGGTTWGAMSWGHATSRDLMHWTEHPVALRARGFPDNITEMFFSGTVVVDESNTSGFGRKGKVPWVAIYTSYYPMEQVLPSGKRVRKDQQAQSIAYSLDKGMTWTTYDAANPVIAEPPAPYHDQHLEFRDPSVFWHVETSRWVAVVSLAKLHKILIYTSQDLKQWDWVSEFGPANAVGGVWECPSIFPLTLDGSQQDKWVLMLGLNPGGPPGTIGSGTQYIVGDFNGTTFTADADSIYDGSGPNDGMIFEDFEGDESLAARGWATTGDFINASPVRGTLSGQNAVTGFQGQQLFNTFLNGDATTGAITSAPFDITYKYINFLVGGGNDINETAIRLNVNGKTVHASTGSNDEHLTWQSWDVSSLKGQRAVIEIIDNASDGWGHINVDQICFSNTRATNQIANWLDWGPDFYAALSFNGLDRDQRTILAWMNNWQYGAAIPTDPWRSAMTVPRRLALKTIDGKPSLVQQPAGRWRTSGNHGREFSFRAVDGVRPLGRLGKALDIELTFSSNMSPSNGLGEFGVSIAATKGYQYGTRVGYDFATQQVFVDRSRSGDVSFDATFPGVYHAPLSNSANGTISLRILLDWSSVEVFGAHGEATITSQIFPGPDAVYGQLFSSGGQTRDVSLQVREIQSTWH.

The N-terminal stretch at 1-21 is a signal peptide; sequence MKLNIFASAILLCTSAFPVAA. Residue D47 is part of the active site. Residues N104, N120, N293, N397, N443, and N641 are each glycosylated (N-linked (GlcNAc...) asparagine).

This sequence belongs to the glycosyl hydrolase 32 family.

The protein is Putative glycosyl hydrolase ecdE of Aspergillus rugulosus (Emericella rugulosa).